A 323-amino-acid polypeptide reads, in one-letter code: tRNA U34 carboxymethyltransferase (323 aa).

Carboxy-S-adenosyl-L-methionine contacts are provided by residues lysine 91, tryptophan 105, lysine 110, glycine 130, 181–182 (IE), methionine 196, tyrosine 200, and arginine 315.

Belongs to the class I-like SAM-binding methyltransferase superfamily. CmoB family. In terms of assembly, homotetramer.

The catalysed reaction is carboxy-S-adenosyl-L-methionine + 5-hydroxyuridine(34) in tRNA = 5-carboxymethoxyuridine(34) in tRNA + S-adenosyl-L-homocysteine + H(+). Catalyzes carboxymethyl transfer from carboxy-S-adenosyl-L-methionine (Cx-SAM) to 5-hydroxyuridine (ho5U) to form 5-carboxymethoxyuridine (cmo5U) at position 34 in tRNAs. This is tRNA U34 carboxymethyltransferase from Serratia proteamaculans (strain 568).